The chain runs to 379 residues: ATP phosphoribosyltransferase regulatory subunit (379 aa).

The protein belongs to the class-II aminoacyl-tRNA synthetase family. HisZ subfamily. In terms of assembly, heteromultimer composed of HisG and HisZ subunits.

Its subcellular location is the cytoplasm. Its pathway is amino-acid biosynthesis; L-histidine biosynthesis; L-histidine from 5-phospho-alpha-D-ribose 1-diphosphate: step 1/9. Functionally, required for the first step of histidine biosynthesis. May allow the feedback regulation of ATP phosphoribosyltransferase activity by histidine. The sequence is that of ATP phosphoribosyltransferase regulatory subunit from Gluconobacter oxydans (strain 621H) (Gluconobacter suboxydans).